A 435-amino-acid chain; its full sequence is DEAD-box ATP-dependent RNA helicase CshB (435 aa).

Residues 5-33 (SRFDQFGFQPFIGLAIDKLGFYEPTEVQQ) carry the Q motif motif. Residues 36–208 (IPGILKGESI…SKYMENPRYE (173 aa)) form the Helicase ATP-binding domain. 49 to 56 (SQTGTGKT) contributes to the ATP binding site. The DEAD box motif lies at 156 to 159 (DEAD). The region spanning 235–378 (LLKNVLVGSQ…HVDWKNKEFV (144 aa)) is the Helicase C-terminal domain. The disordered stretch occupies residues 383–435 (RNRRAKREAKRETADPREIGMRKKAKQKGKPNYKKKINYKMNEIKRRERRKKR). Basic and acidic residues predominate over residues 391-403 (AKRETADPREIGM). Residues 404–420 (RKKAKQKGKPNYKKKIN) are compositionally biased toward basic residues.

The protein belongs to the DEAD box helicase family. CshB subfamily.

Its subcellular location is the cytoplasm. The enzyme catalyses ATP + H2O = ADP + phosphate + H(+). In terms of biological role, DEAD-box RNA helicase involved in cold tolerance, motility, and tolerance to heat, alkali and oxidative stress. The polypeptide is DEAD-box ATP-dependent RNA helicase CshB (Listeria monocytogenes serovar 1/2a (strain ATCC BAA-679 / EGD-e)).